Consider the following 393-residue polypeptide: Acyl-homoserine-lactone synthase OpaM (393 aa).

It belongs to the LuxM / VanM family.

The enzyme catalyses a fatty acyl-[ACP] + S-adenosyl-L-methionine = an N-acyl-L-homoserine lactone + S-methyl-5'-thioadenosine + holo-[ACP] + H(+). This is Acyl-homoserine-lactone synthase OpaM (opaM) from Vibrio parahaemolyticus serotype O3:K6 (strain RIMD 2210633).